A 55-amino-acid polypeptide reads, in one-letter code: Large ribosomal subunit protein bL33 (55 aa).

Belongs to the bacterial ribosomal protein bL33 family.

This chain is Large ribosomal subunit protein bL33, found in Yersinia enterocolitica serotype O:8 / biotype 1B (strain NCTC 13174 / 8081).